Reading from the N-terminus, the 576-residue chain is Sulfite reductase [NADPH] hemoprotein beta-component (576 aa).

Positions 439, 445, 485, and 489 each coordinate [4Fe-4S] cluster. Siroheme is bound at residue cysteine 489.

It belongs to the nitrite and sulfite reductase 4Fe-4S domain family. As to quaternary structure, alpha(8)-beta(8). The alpha component is a flavoprotein, the beta component is a hemoprotein. It depends on siroheme as a cofactor. Requires [4Fe-4S] cluster as cofactor.

It carries out the reaction hydrogen sulfide + 3 NADP(+) + 3 H2O = sulfite + 3 NADPH + 4 H(+). Its pathway is sulfur metabolism; hydrogen sulfide biosynthesis; hydrogen sulfide from sulfite (NADPH route): step 1/1. In terms of biological role, component of the sulfite reductase complex that catalyzes the 6-electron reduction of sulfite to sulfide. This is one of several activities required for the biosynthesis of L-cysteine from sulfate. This Aliivibrio salmonicida (strain LFI1238) (Vibrio salmonicida (strain LFI1238)) protein is Sulfite reductase [NADPH] hemoprotein beta-component.